Here is a 534-residue protein sequence, read N- to C-terminus: Probable glycine dehydrogenase (decarboxylating) subunit 2 (534 aa).

Lysine 273 is subject to N6-(pyridoxal phosphate)lysine.

It belongs to the GcvP family. C-terminal subunit subfamily. In terms of assembly, the glycine cleavage system is composed of four proteins: P, T, L and H. In this organism, the P 'protein' is a heterodimer of two subunits. Pyridoxal 5'-phosphate serves as cofactor.

The catalysed reaction is N(6)-[(R)-lipoyl]-L-lysyl-[glycine-cleavage complex H protein] + glycine + H(+) = N(6)-[(R)-S(8)-aminomethyldihydrolipoyl]-L-lysyl-[glycine-cleavage complex H protein] + CO2. Functionally, the glycine cleavage system catalyzes the degradation of glycine. The P protein binds the alpha-amino group of glycine through its pyridoxal phosphate cofactor; CO(2) is released and the remaining methylamine moiety is then transferred to the lipoamide cofactor of the H protein. This is Probable glycine dehydrogenase (decarboxylating) subunit 2 from Bacillus cereus (strain ATCC 14579 / DSM 31 / CCUG 7414 / JCM 2152 / NBRC 15305 / NCIMB 9373 / NCTC 2599 / NRRL B-3711).